Reading from the N-terminus, the 366-residue chain is Chorismate synthase (366 aa).

Arginine 48 and arginine 54 together coordinate NADP(+). Residues 125 to 127, 238 to 239, glycine 278, 293 to 297, and arginine 319 each bind FMN; these read RSS, NA, and KPTSS.

The protein belongs to the chorismate synthase family. Homotetramer. FMNH2 serves as cofactor.

It catalyses the reaction 5-O-(1-carboxyvinyl)-3-phosphoshikimate = chorismate + phosphate. The protein operates within metabolic intermediate biosynthesis; chorismate biosynthesis; chorismate from D-erythrose 4-phosphate and phosphoenolpyruvate: step 7/7. Functionally, catalyzes the anti-1,4-elimination of the C-3 phosphate and the C-6 proR hydrogen from 5-enolpyruvylshikimate-3-phosphate (EPSP) to yield chorismate, which is the branch point compound that serves as the starting substrate for the three terminal pathways of aromatic amino acid biosynthesis. This reaction introduces a second double bond into the aromatic ring system. This is Chorismate synthase from Cellvibrio japonicus (strain Ueda107) (Pseudomonas fluorescens subsp. cellulosa).